The chain runs to 271 residues: Formamidopyrimidine-DNA glycosylase (271 aa).

Pro2 functions as the Schiff-base intermediate with DNA in the catalytic mechanism. Glu3 functions as the Proton donor in the catalytic mechanism. Lys57 serves as the catalytic Proton donor; for beta-elimination activity. The DNA site is built by His90, Arg109, and Lys151. An FPG-type zinc finger spans residues 236–270 (HVYGRGSKSCTHCGNLLSEIRLGQRTTVFCGLCQT). The active-site Proton donor; for delta-elimination activity is the Arg260.

This sequence belongs to the FPG family. In terms of assembly, monomer. Zn(2+) serves as cofactor.

It catalyses the reaction Hydrolysis of DNA containing ring-opened 7-methylguanine residues, releasing 2,6-diamino-4-hydroxy-5-(N-methyl)formamidopyrimidine.. It carries out the reaction 2'-deoxyribonucleotide-(2'-deoxyribose 5'-phosphate)-2'-deoxyribonucleotide-DNA = a 3'-end 2'-deoxyribonucleotide-(2,3-dehydro-2,3-deoxyribose 5'-phosphate)-DNA + a 5'-end 5'-phospho-2'-deoxyribonucleoside-DNA + H(+). Functionally, involved in base excision repair of DNA damaged by oxidation or by mutagenic agents. Acts as a DNA glycosylase that recognizes and removes damaged bases. Has a preference for oxidized purines, such as 7,8-dihydro-8-oxoguanine (8-oxoG). Has AP (apurinic/apyrimidinic) lyase activity and introduces nicks in the DNA strand. Cleaves the DNA backbone by beta-delta elimination to generate a single-strand break at the site of the removed base with both 3'- and 5'-phosphates. The polypeptide is Formamidopyrimidine-DNA glycosylase (Shewanella denitrificans (strain OS217 / ATCC BAA-1090 / DSM 15013)).